A 146-amino-acid polypeptide reads, in one-letter code: Acidic phospholipase A2 CM-II (146 aa).

An N-terminal signal peptide occupies residues 1 to 21 (MNPAHLLILAAVCVSPLGAFS). The propeptide occupies 22-27 (NRPMPL). Disulfide bonds link cysteine 38–cysteine 98, cysteine 53–cysteine 145, cysteine 55–cysteine 71, cysteine 70–cysteine 126, cysteine 77–cysteine 119, cysteine 87–cysteine 112, and cysteine 105–cysteine 117. Positions 54, 56, and 58 each coordinate Ca(2+). Histidine 74 is a catalytic residue. Aspartate 75 contributes to the Ca(2+) binding site. The active site involves aspartate 120.

This sequence belongs to the phospholipase A2 family. Group I subfamily. D49 sub-subfamily. The cofactor is Ca(2+). Expressed by the venom gland.

It localises to the secreted. It carries out the reaction a 1,2-diacyl-sn-glycero-3-phosphocholine + H2O = a 1-acyl-sn-glycero-3-phosphocholine + a fatty acid + H(+). Its function is as follows. PLA2 catalyzes the calcium-dependent hydrolysis of the 2-acyl groups in 3-sn-phosphoglycerides. Is able to suppress the acetylcholine (ACh)-evoked current mediated by alpha-7 (CHRNA7)-similar nAChRs in L.stagnalis neurons (IC(50)=37 nM) and to compete with alpha-bungarotoxin for binding to muscle- and alpha-7 neuronal nAChR types, as well as to AChBPs. In inhibition of alpha-bungarotoxin binding, this toxin is similarly active against T.californica nAChR (IC(50)=1.2 uM), human alpha-7 nAChR (IC(50)=3.2 uM), and L.stagnalis AChBP (IC(50)=1.0 uM), whereas it is not active against A.californica AChBP (IC(50)&gt;100 uM). The sequence is that of Acidic phospholipase A2 CM-II from Naja kaouthia (Monocled cobra).